A 136-amino-acid polypeptide reads, in one-letter code: MSLTLRVLAPDQNVFDGSADEVILPSTTGQLGILTGHISMLTAIDVGVLRVRANGSWNSIALMGGFAEVDSDEVTVLVNKAELGSSIDANAAEADFQKATTAVAGMEGQPASPEKVKAQQQLNEARARMQASKSAD.

The tract at residues 104-136 (AGMEGQPASPEKVKAQQQLNEARARMQASKSAD) is disordered.

The protein belongs to the ATPase epsilon chain family. As to quaternary structure, F-type ATPases have 2 components, CF(1) - the catalytic core - and CF(0) - the membrane proton channel. CF(1) has five subunits: alpha(3), beta(3), gamma(1), delta(1), epsilon(1). CF(0) has three main subunits: a, b and c.

It localises to the cellular thylakoid membrane. Functionally, produces ATP from ADP in the presence of a proton gradient across the membrane. The sequence is that of ATP synthase epsilon chain from Synechococcus sp. (strain CC9902).